The sequence spans 166 residues: UPF0336 protein Mb0656 (166 aa).

It belongs to the UPF0336 family.

In Mycobacterium bovis (strain ATCC BAA-935 / AF2122/97), this protein is UPF0336 protein Mb0656.